A 529-amino-acid polypeptide reads, in one-letter code: Probable feruloyl esterase B-1 (529 aa).

The signal sequence occupies residues 1-19 (MKISYFFVASLSYVSVARA). 2 disulfides stabilise this stretch: C27-C75 and C63-C114. Residues N53, N64, N85, N98, and N138 are each glycosylated (N-linked (GlcNAc...) asparagine). Cystine bridges form between C187-C445, C256-C273, C282-C295, and C505-C527. Residue S188 is the Acyl-ester intermediate of the active site. N233 carries an N-linked (GlcNAc...) asparagine glycan. Positions 257, 260, 262, 264, and 266 each coordinate Ca(2+). N286, N290, and N354 each carry an N-linked (GlcNAc...) asparagine glycan. Residues D404 and H444 each act as charge relay system in the active site.

This sequence belongs to the tannase family.

The protein localises to the secreted. The enzyme catalyses feruloyl-polysaccharide + H2O = ferulate + polysaccharide.. Its function is as follows. Involved in degradation of plant cell walls. Hydrolyzes the feruloyl-arabinose ester bond in arabinoxylans as well as the feruloyl-galactose and feruloyl-arabinose ester bonds in pectin. The sequence is that of Probable feruloyl esterase B-1 (faeB-1) from Aspergillus terreus (strain NIH 2624 / FGSC A1156).